Reading from the N-terminus, the 378-residue chain is Alcohol dehydrogenase class-3 (378 aa).

The residue at position 1 (Ala-1) is an N-acetylalanine. Position 46 (Cys-46) interacts with Zn(2+). His-47 is an NAD(+) binding site. 2 residues coordinate an alcohol: Thr-48 and His-68. His-68, Glu-69, Cys-98, Cys-101, Cys-104, Cys-112, and Cys-176 together coordinate Zn(2+). NAD(+) contacts are provided by residues 201-206, Asp-225, Lys-230, 294-296, 319-321, and Arg-371; these read GLGTVG, VGV, and TAF.

The protein belongs to the zinc-containing alcohol dehydrogenase family. Class-III subfamily. In terms of assembly, homodimer. It depends on Zn(2+) as a cofactor.

Its subcellular location is the cytoplasm. It carries out the reaction a primary alcohol + NAD(+) = an aldehyde + NADH + H(+). The enzyme catalyses a secondary alcohol + NAD(+) = a ketone + NADH + H(+). It catalyses the reaction S-(hydroxymethyl)glutathione + NADP(+) = S-formylglutathione + NADPH + H(+). The catalysed reaction is S-(hydroxymethyl)glutathione + NAD(+) = S-formylglutathione + NADH + H(+). Its function is as follows. Class-III ADH is remarkably ineffective in oxidizing ethanol, but it readily catalyzes the oxidation of long-chain primary alcohols and the oxidation of S-(hydroxymethyl) glutathione. The chain is Alcohol dehydrogenase class-3 from Pisum sativum (Garden pea).